Reading from the N-terminus, the 367-residue chain is Aldo-keto reductase AMT2 (367 aa).

NADP(+) is bound at residue aspartate 76. The Proton donor role is filled by tyrosine 81. Residue histidine 173 coordinates substrate. NADP(+)-binding positions include 203–204 (SS), glutamine 229, 258–268 (GPLAAGKLARP), and 330–338 (SSVERMDEV). A disordered region spans residues 346 to 367 (LSDEEESRLEDPYKAQPPQGHS).

Belongs to the aldo/keto reductase family.

The protein operates within mycotoxin biosynthesis. Its function is as follows. Aldo-keto reductase; part of the gene clusters that mediate the biosynthesis of AM-toxins, host-selective toxins (HSTs) causing Alternaria blotch on apple, a worldwide distributed disease. AM-toxins are cyclic depsipeptides containing the 3 residues 2-hydroxy-isovaleric acid (2-HIV), dehydroalanine, L-alanine which are common for all 3 AM-toxins I to III. The fourth precursor is L-alpha-amino-methoxyphenyl-valeric acid (L-Amv) for AM-toxin I, L-alpha-amino-phenyl-valeric acid (L-Apv) for AM-toxin II, and L-alpha-amino-hydroxyphenyl-valeric acid (L-Ahv) for AM-toxin III. AM-toxins have two target sites for affecting susceptible apple cells; they cause invagination of the plasma membrane and electrolyte loss and chloroplast disorganization. The non-ribosomal peptide synthetase AMT1 contains 4 catalytic modules and is responsible for activation of each residue in AM-toxin. The aldo-keto reductase AMT2 catalyzes the conversion of 2-keto-isovaleric acid (2-KIV) to 2-hydroxy-isovaleric acid (2-HIV), one of the precursor residues incorporated by AMT1 during AM-toxin biosynthesis, by reduction of its ketone to an alcohol. The cytochrome P450 monooxygenase AMT3 and the thioesterase AMT4 are also important for AM-toxin production, but their exact function within the AM-toxin biosynthesis are not known yet. Up to 21 proteins (including AMT1 to AMT4) are predicted to be involved in AM-toxin biosynthesis since their expression ishighly up-regulated in AM-toxin-producing cultures. This Alternaria alternata (Alternaria rot fungus) protein is Aldo-keto reductase AMT2.